We begin with the raw amino-acid sequence, 71 residues long: Large ribosomal subunit protein uL29 (71 aa).

Belongs to the universal ribosomal protein uL29 family.

This is Large ribosomal subunit protein uL29 from Rickettsia typhi (strain ATCC VR-144 / Wilmington).